Reading from the N-terminus, the 543-residue chain is Probable E3 ubiquitin-protein ligase ARI9 (543 aa).

A disordered region spans residues 1–26 (MDFSDDDMIDNKSGEENYSYGGGNES). The interval 124 to 332 (VNIQCGICFE…RHSGACNRFV (209 aa)) is TRIAD supradomain. The Zn(2+) site is built by C128, C131, C145, H147, C150, C153, C173, C178, C217, C222, C240, C242, C247, C250, H255, C260, C287, and C290. The RING-type 1 zinc finger occupies 128–178 (CGICFESYTREEIARVSCGHPYCKTCWAGYITTKIEDGPGCLRVKCPEPSC). The IBR-type zinc finger occupies 197-260 (EKYSRYILRS…SEDAHSPVDC (64 aa)). The RING-type 2; atypical zinc finger occupies 287–317 (CPECKRPIEKNDGCNHMTCSAPCGHEFCWIC). Residue C300 is part of the active site. C305, C309, C314, C317, H324, and C328 together coordinate Zn(2+).

The protein belongs to the RBR family. Ariadne subfamily. Zn(2+) is required as a cofactor.

It carries out the reaction [E2 ubiquitin-conjugating enzyme]-S-ubiquitinyl-L-cysteine + [acceptor protein]-L-lysine = [E2 ubiquitin-conjugating enzyme]-L-cysteine + [acceptor protein]-N(6)-ubiquitinyl-L-lysine.. It participates in protein modification; protein ubiquitination. Might act as an E3 ubiquitin-protein ligase, or as part of E3 complex, which accepts ubiquitin from specific E2 ubiquitin-conjugating enzymes and then transfers it to substrates. This is Probable E3 ubiquitin-protein ligase ARI9 (ARI9) from Arabidopsis thaliana (Mouse-ear cress).